Reading from the N-terminus, the 456-residue chain is Enolase (456 aa).

Gln164 contributes to the (2R)-2-phosphoglycerate binding site. The Proton donor role is filled by Glu207. Residues Asp244, Glu287, and Asp314 each coordinate Mg(2+). (2R)-2-phosphoglycerate contacts are provided by Lys339, Arg368, Ser369, and Lys390. Lys339 serves as the catalytic Proton acceptor.

This sequence belongs to the enolase family. In terms of assembly, component of the RNA degradosome, a multiprotein complex involved in RNA processing and mRNA degradation. The cofactor is Mg(2+).

The protein localises to the cytoplasm. The protein resides in the secreted. It is found in the cell surface. It carries out the reaction (2R)-2-phosphoglycerate = phosphoenolpyruvate + H2O. It participates in carbohydrate degradation; glycolysis; pyruvate from D-glyceraldehyde 3-phosphate: step 4/5. In terms of biological role, catalyzes the reversible conversion of 2-phosphoglycerate (2-PG) into phosphoenolpyruvate (PEP). It is essential for the degradation of carbohydrates via glycolysis. This Francisella tularensis subsp. novicida (strain U112) protein is Enolase.